A 261-amino-acid polypeptide reads, in one-letter code: Putative hydro-lyase SH0274 (261 aa).

This sequence belongs to the D-glutamate cyclase family.

This is Putative hydro-lyase SH0274 from Staphylococcus haemolyticus (strain JCSC1435).